Reading from the N-terminus, the 370-residue chain is Dihydroorotate dehydrogenase (370 aa).

Substrate-binding positions include lysine 82, asparagine 135–methionine 139, and asparagine 200. Lysine 82–threonine 83 lines the FMN pocket. Residue asparagine 200 participates in FMN binding. Cysteine 203 serves as the catalytic Nucleophile. 2 residues coordinate FMN: lysine 241 and isoleucine 269. Asparagine 270 to threonine 271 serves as a coordination point for substrate. Residues glycine 297, glycine 328–glycine 329, and alanine 350–threonine 351 each bind FMN.

The protein belongs to the dihydroorotate dehydrogenase family. FMN is required as a cofactor.

It carries out the reaction (S)-dihydroorotate + A = orotate + AH2. It participates in pyrimidine metabolism; UMP biosynthesis via de novo pathway. In terms of biological role, catalyzes the conversion of dihydroorotate to orotate. Participates in the pyrimidine biosynthetic pathway. In Dictyostelium discoideum (Social amoeba), this protein is Dihydroorotate dehydrogenase (pyr4).